Consider the following 789-residue polypeptide: MTSFQEVPLQTSNFAHVIFQNVAKSYLPNAHLECHYTLTPYIHPHPKDWVGIFKVGWSTARDYYTFLWSPMPEHYVEGSTVNCVLAFQGYYLPNDDGEFYQFCYVTHKGEIRGASTPFQFRASSPVEELLTMEDEGNSDMLVVTTKAGLLELKIEKTMKEKEELLKLIAVLEKETAQLREQVGRMERELNHEKERCDQLQAEQKGLTEVTQSLKMENEEFKKRFSDATSKAHQLEEDIVSVTHKAIEKETELDSLKDKLKKAQHEREQLECQLKTEKDEKELYKVHLKNTEIENTKLMSEVQTLKNLDGNKESVITHFKEEIGRLQLCLAEKENLQRTFLLTTSSKEDTCFLKEQLRKAEEQVQATRQEVVFLAKELSDAVNVRDRTMADLHTARLENEKVKKQLADAVAELKLNAMKKDQDKTDTLEHELRREVEDLKLRLQMAADHYKEKFKECQRLQKQINKLSDQSANNNNVFTKKTGNQQKVNDASVNTDPATSASTVDVKPSPSAAEADFDIVTKGQVCEMTKEIADKTEKYNKCKQLLQDEKAKCNKYADELAKMELKWKEQVKIAENVKLELAEVQDNYKELKRSLENPAERKMEGQNSQSPQCFKTCSEQNGYVLTLSNAQPVLQYGNPYASQETRDGADGAFYPDEIQRPPVRVPSWGLEDNVVCSQPARNFSRPDGLEDSEDSKEDENVPTAPDPPSQHLRGHGTGFCFDSSFDVHKKCPLCELMFPPNYDQSKFEEHVESHWKVCPMCSEQFPPDYDQQVFERHVQTHFDQNVLNFD.

A phosphoserine mark is found at Ser124, Ser138, and Ser225. A coiled-coil region spans residues 144–599; it reads TTKAGLLELK…LKRSLENPAE (456 aa). Positions 320–420 are oligomerization; sequence EEIGRLQLCL…ELKLNAMKKD (101 aa). Positions 481 to 502 are enriched in polar residues; it reads TGNQQKVNDASVNTDPATSAST. Residues 481 to 508 are disordered; that stretch reads TGNQQKVNDASVNTDPATSASTVDVKPS. Ser593 bears the Phosphoserine; by IKKA mark. Ser609 carries the phosphoserine modification. The segment at 639–660 is disordered; it reads YASQETRDGADGAFYPDEIQRP. Ser666 is modified (phosphoserine; by IKKA). Residues 678-712 form a disordered region; sequence PARNFSRPDGLEDSEDSKEDENVPTAPDPPSQHLR. UBZ1-type zinc fingers lie at residues 727-753 and 754-780; these read HKKC…VESH and WKVC…VQTH. Zn(2+) contacts are provided by Cys730, Cys733, His749, His753, Cys757, Cys760, His776, and His780.

Homooligomer. Interacts with TNFAIP3. Interacts with STARD13. Interacts with MYO6. Interacts with TOM1; the interaction is indirect and is mediated by MYO6, which acts as a bridge between TOM1 and TAX1BP1. Interacts with MAVS; this interaction induces MAVS polyubiquitination. Interacts with TNIP1. Interacts with TRAF6; this interaction mediates deubiquitination of TRAF6 and inhibition of NF-kappa-B activation. Interacts with RIPK1; this interaction negatively regulates RIPK1 ubiquitination. Interacts with NBR1. Interacts with TBK1. Interacts with RB1CC1. Interacts with SQSTM1. Interacts with AZI2. Interacts with TICAM1 and TRIM32; these interactions target TICAM1 to TAX1BP1-mediated selective autophagic degradation. As to quaternary structure, (Microbial infection) Interacts with the HTLV-1 protein Tax. In terms of assembly, (Microbial infection) Interacts with Respiratory syncytial virus protein N; this interaction may promote viral growth by inhibiting the innate immune response. (Microbial infection) Interacts with Lassa virus protein Z. As to quaternary structure, (Microbial infection) Interacts with Mopeia virus protein Z. In terms of processing, phosphorylated in the C-terminal region by CHUK/IKKA leading to NF-kappa-B signaling down-regulation. In terms of tissue distribution, expressed in all tissues tested.

It is found in the cytoplasm. The protein resides in the mitochondrion. The protein localises to the preautophagosomal structure. It localises to the cytoplasmic vesicle. Its subcellular location is the autophagosome. In terms of biological role, ubiquitin-binding adapter that participates in inflammatory, antiviral and innate immune processes as well as selective autophagy regulation. Plays a key role in the negative regulation of NF-kappa-B and IRF3 signalings by acting as an adapter for the ubiquitin-editing enzyme A20/TNFAIP3 to bind and inactivate its substrates. Disrupts the interactions between the E3 ubiquitin ligase TRAF3 and TBK1/IKBKE to attenuate 'Lys63'-linked polyubiquitination of TBK1 and thereby IFN-beta production. Also recruits A20/TNFAIP3 to ubiquitinated signaling proteins TRAF6 and RIPK1, leading to their deubiquitination and disruption of IL-1 and TNF-induced NF-kappa-B signaling pathways. Inhibits virus-induced apoptosis by inducing the 'Lys-48'-linked polyubiquitination and degradation of MAVS via recruitment of the E3 ligase ITCH, thereby attenuating MAVS-mediated apoptosis signaling. As a macroautophagy/autophagy receptor, facilitates the xenophagic clearance of pathogenic bacteria such as Salmonella typhimurium and Mycobacterium tuberculosis. Upon NBR1 recruitment to the SQSTM1-ubiquitin condensates, acts as the major recruiter of RB1CC1 to these ubiquitin condensates to promote their autophagic degradation. Mediates the autophagic degradation of other substrates including TICAM1. This chain is Tax1-binding protein 1 (TAX1BP1), found in Homo sapiens (Human).